The sequence spans 239 residues: Ribonuclease P protein component 3 (239 aa).

The protein belongs to the eukaryotic/archaeal RNase P protein component 3 family. In terms of assembly, consists of a catalytic RNA component and at least 4-5 protein subunits.

The protein resides in the cytoplasm. The catalysed reaction is Endonucleolytic cleavage of RNA, removing 5'-extranucleotides from tRNA precursor.. Part of ribonuclease P, a protein complex that generates mature tRNA molecules by cleaving their 5'-ends. The polypeptide is Ribonuclease P protein component 3 (Methanosarcina acetivorans (strain ATCC 35395 / DSM 2834 / JCM 12185 / C2A)).